The chain runs to 336 residues: GTP 3',8-cyclase (336 aa).

In terms of domain architecture, Radical SAM core spans 17–238 (GFSRRFHYLR…WTQQNRNLTD (222 aa)). Arg26 provides a ligand contact to GTP. Residues Cys33 and Cys37 each coordinate [4Fe-4S] cluster. Tyr39 contributes to the S-adenosyl-L-methionine binding site. Cys40 contributes to the [4Fe-4S] cluster binding site. A GTP-binding site is contributed by Arg75. Position 79 (Gly79) interacts with S-adenosyl-L-methionine. GTP is bound at residue Thr106. Ser130 contributes to the S-adenosyl-L-methionine binding site. Residue Lys167 coordinates GTP. Met201 contacts S-adenosyl-L-methionine. Residues Cys264 and Cys267 each contribute to the [4Fe-4S] cluster site. Position 269–271 (269–271 (RLR)) interacts with GTP. Residue Cys281 participates in [4Fe-4S] cluster binding.

It belongs to the radical SAM superfamily. MoaA family. In terms of assembly, monomer and homodimer. Requires [4Fe-4S] cluster as cofactor.

The enzyme catalyses GTP + AH2 + S-adenosyl-L-methionine = (8S)-3',8-cyclo-7,8-dihydroguanosine 5'-triphosphate + 5'-deoxyadenosine + L-methionine + A + H(+). It functions in the pathway cofactor biosynthesis; molybdopterin biosynthesis. In terms of biological role, catalyzes the cyclization of GTP to (8S)-3',8-cyclo-7,8-dihydroguanosine 5'-triphosphate. This Tolumonas auensis (strain DSM 9187 / NBRC 110442 / TA 4) protein is GTP 3',8-cyclase.